The following is a 156-amino-acid chain: Cytochrome c-type biogenesis protein CcmE 1 (156 aa).

Over 1-8 (MNATRKQR) the chain is Cytoplasmic. The helical; Signal-anchor for type II membrane protein transmembrane segment at 9 to 29 (LWLVIGVLTAAALAVTLIALA) threads the bilayer. The Periplasmic segment spans residues 30–156 (LQRNMSYLFT…AAAAPLSGVR (127 aa)). The heme site is built by His123 and Tyr127.

Belongs to the CcmE/CycJ family.

Its subcellular location is the cell inner membrane. In terms of biological role, heme chaperone required for the biogenesis of c-type cytochromes. Transiently binds heme delivered by CcmC and transfers the heme to apo-cytochromes in a process facilitated by CcmF and CcmH. In Xanthomonas campestris pv. campestris (strain 8004), this protein is Cytochrome c-type biogenesis protein CcmE 1.